The sequence spans 101 residues: uncharacterized protein (101 aa).

Helical transmembrane passes span 10–30 (VLAILVCQFIGPNVFIIIGSI) and 67–87 (IILGFIGIYVFLFVLLFILSI).

The protein localises to the membrane. This is an uncharacterized protein from Acanthamoeba polyphaga (Amoeba).